A 399-amino-acid chain; its full sequence is Probable inactive 2-oxoglutarate-dependent dioxygenase AOP2 (399 aa).

Positions 248–345 (GGDDVEANDD…RYTAAIFTCP (98 aa)) constitute a Fe2OG dioxygenase domain. H268, D270, and H325 together coordinate Fe cation. R336 provides a ligand contact to 2-oxoglutarate.

It belongs to the iron/ascorbate-dependent oxidoreductase family. Fe(2+) is required as a cofactor.

This chain is Probable inactive 2-oxoglutarate-dependent dioxygenase AOP2 (AOP2), found in Arabidopsis thaliana (Mouse-ear cress).